An 851-amino-acid polypeptide reads, in one-letter code: Oligopeptide transport ATP-binding protein OppF (851 aa).

Positions 14–788 (VKALSMLFKV…PVHPYTRSLI (775 aa)) constitute an ABC transporter domain. 48–55 (GESGSGKS) provides a ligand contact to ATP.

This sequence belongs to the ABC transporter superfamily. In terms of assembly, the complex is composed of two ATP-binding proteins (OppD and OppF), two transmembrane proteins (OppB and OppC) and a solute-binding protein (OppA).

It is found in the cell membrane. It catalyses the reaction a [peptide](out) + ATP + H2O = a [peptide](in) + ADP + phosphate + H(+). In terms of biological role, part of the ABC transporter complex OppABCDF involved in the uptake of oligopeptides. Probably responsible for energy coupling to the transport system. In Mycoplasma pneumoniae (strain ATCC 29342 / M129 / Subtype 1) (Mycoplasmoides pneumoniae), this protein is Oligopeptide transport ATP-binding protein OppF (oppF).